Reading from the N-terminus, the 173-residue chain is Translation initiation factor IF-3 (173 aa).

Belongs to the IF-3 family. Monomer.

The protein localises to the cytoplasm. IF-3 binds to the 30S ribosomal subunit and shifts the equilibrium between 70S ribosomes and their 50S and 30S subunits in favor of the free subunits, thus enhancing the availability of 30S subunits on which protein synthesis initiation begins. The polypeptide is Translation initiation factor IF-3 (Caulobacter sp. (strain K31)).